Consider the following 1358-residue polypeptide: Regulatory protein SIR4 (1358 aa).

The span at 1 to 15 (MPNDNKTPNRSSTPK) shows a compositional bias: polar residues. Disordered stretches follow at residues 1 to 98 (MPND…PHSN), 252 to 277 (SLSVPKVSAGDSGISPEESKARSPGI), 356 to 466 (HDEK…PPEI), 498 to 544 (VQGE…ISNG), 677 to 726 (ASTE…EDEQ), 752 to 787 (VSDSDDSSSDNDSLTDLESLSSGESNEIKVTNDLDT), and 913 to 970 (HSQE…ENLS). A compositionally biased stretch (basic and acidic residues) spans 26–39 (KIPEREEKSNEVKT). Composition is skewed to polar residues over residues 49-66 (KSKNYSRPSTAIHTSPHQ) and 75-96 (HKQLQQPKSSPLKKNNYNSFPH). The span at 373–388 (QKMKEDADLKRMEILK) shows a compositional bias: basic and acidic residues. Residues 428-437 (QENNYNSTSR) are compositionally biased toward polar residues. Over residues 452-464 (KNGENKKIGKRPP) the composition is skewed to basic and acidic residues. Positions 507-517 (RNNTLNVTPSK) are enriched in polar residues. Serine 692 carries the phosphoserine modification. Over residues 706–720 (FPVSLSQPSKKSFAN) the composition is skewed to polar residues. Residues 754–766 (DSDDSSSDNDSLT) show a composition bias toward acidic residues. Residues 777 to 787 (NEIKVTNDLDT) show a composition bias toward basic and acidic residues. A compositionally biased stretch (polar residues) spans 916–932 (EQNSSSAKPSQIPTVSS). Lysine 1128 participates in a covalent cross-link: Glycyl lysine isopeptide (Lys-Gly) (interchain with G-Cter in SUMO). Residues 1271–1347 (LSFVDIVLSK…DAKINKLMEK (77 aa)) adopt a coiled-coil conformation.

As to quaternary structure, homodimer. Interacts with MPS3. Interacts with RIS1. Interacts with SIR1, SIR2 and SIR3. Interacts with YKU80. Interacts with UBP10. Interacts with RAP1 (via C-terminus).

The protein localises to the nucleus. Its function is as follows. The proteins SIR1 through SIR4 are required for transcriptional repression of the silent mating type loci, HML and HMR. The proteins SIR2 through SIR4 repress mulitple loci by modulating chromatin structure. Involves the compaction of chromatin fiber into a more condensed form. This is Regulatory protein SIR4 (SIR4) from Saccharomyces cerevisiae (strain ATCC 204508 / S288c) (Baker's yeast).